The sequence spans 383 residues: Putative type I specificity subunit S.MgeORF438P (383 aa).

The segment at 1–142 is TRD1; it reads MTPKLKLNNN…KELEIPFTSN (142 aa). The interval 143–182 is conserved region 1; the sequence is KNEQHAIANTLSVFDERLENLASLIEINRKLRDEYAHKLF. Residues 143-182 are a coiled coil; it reads KNEQHAIANTLSVFDERLENLASLIEINRKLRDEYAHKLF. Positions 183 to 330 are TRD2; sequence SLDEAFLSHW…GEIKVPYVKS (148 aa). The segment at 331-370 is conserved region 2; the sequence is FQLQRKAGKIVFLLDQKLDQYKKELSSLTVIRDTLLKKLF. Residues 331–370 are a coiled coil; the sequence is FQLQRKAGKIVFLLDQKLDQYKKELSSLTVIRDTLLKKLF.

This sequence belongs to the type-I restriction system S methylase family.

Functionally, the specificity (S) subunit of a type I restriction enzyme; this subunit dictates DNA sequence specificity. This bacterium does not encode the associated endonuclease or methylase subunits. The chain is Putative type I specificity subunit S.MgeORF438P from Mycoplasma genitalium (strain ATCC 33530 / DSM 19775 / NCTC 10195 / G37) (Mycoplasmoides genitalium).